We begin with the raw amino-acid sequence, 200 residues long: GTP cyclohydrolase-2 (200 aa).

50 to 54 contributes to the GTP binding site; the sequence is RVHSE. Residues C55, C66, and C68 each contribute to the Zn(2+) site. GTP contacts are provided by residues Q71, 93–95, and T115; that span reads EGR. D127 acts as the Proton acceptor in catalysis. Residue R129 is the Nucleophile of the active site. T150 and K155 together coordinate GTP.

This sequence belongs to the GTP cyclohydrolase II family. The cofactor is Zn(2+).

The enzyme catalyses GTP + 4 H2O = 2,5-diamino-6-hydroxy-4-(5-phosphoribosylamino)-pyrimidine + formate + 2 phosphate + 3 H(+). Its pathway is cofactor biosynthesis; riboflavin biosynthesis; 5-amino-6-(D-ribitylamino)uracil from GTP: step 1/4. Functionally, catalyzes the conversion of GTP to 2,5-diamino-6-ribosylamino-4(3H)-pyrimidinone 5'-phosphate (DARP), formate and pyrophosphate. This is GTP cyclohydrolase-2 from Acinetobacter baumannii (strain SDF).